Reading from the N-terminus, the 164-residue chain is UPF0114 protein YqhA (164 aa).

A run of 3 helical transmembrane segments spans residues 15–35 (LLAPVYFGLSLALIALALKFF), 53–73 (LILVLLSLVDMTLVGGLLVMV), and 136–156 (LMWYVIIHLTFVLSAFVMGYL).

This sequence belongs to the UPF0114 family.

It is found in the cell membrane. This Salmonella agona (strain SL483) protein is UPF0114 protein YqhA.